The following is a 110-amino-acid chain: MSDTLNRVAQVLEDRKGADADSSYVASLYHKGLNKILEKLGEESVETIIAAKDAQISGDCSDVIYETADLWFHSLVMLAQLGQHPQAVLDELDRRFGLSGHAEKASRPSA.

It belongs to the PRA-PH family.

The protein resides in the cytoplasm. It carries out the reaction 1-(5-phospho-beta-D-ribosyl)-ATP + H2O = 1-(5-phospho-beta-D-ribosyl)-5'-AMP + diphosphate + H(+). It functions in the pathway amino-acid biosynthesis; L-histidine biosynthesis; L-histidine from 5-phospho-alpha-D-ribose 1-diphosphate: step 2/9. In Pseudomonas fluorescens (strain SBW25), this protein is Phosphoribosyl-ATP pyrophosphatase.